The primary structure comprises 129 residues: Small ribosomal subunit protein uS9 (129 aa).

This sequence belongs to the universal ribosomal protein uS9 family.

This is Small ribosomal subunit protein uS9 from Chlorobium luteolum (strain DSM 273 / BCRC 81028 / 2530) (Pelodictyon luteolum).